The following is a 1467-amino-acid chain: Gag-Pol polyprotein (1467 aa).

Residue glycine 2 is the site of N-myristoyl glycine; by host attachment. The short motif at 16–22 (FEHIRLR) is the Nuclear export signal element. A Nuclear localization signal motif is present at residues 26–32 (KKKYQIK). Residues 116–144 (NAERNTTETSSGQKKNDKGVTVPPGGSQN) are disordered. 2 CCHC-type zinc fingers span residues 402 to 419 (VKCYNCGKFGHMQRQCPE) and 423 to 440 (MRCLKCGKPGHLAKDCRG). The Peptidase A2 domain maps to 535–606 (IKALLDTGAD…TPINIIGRNL (72 aa)). The active-site For protease activity; shared with dimeric partner is aspartate 540. One can recognise a Reverse transcriptase domain in the interval 662–852 (EGKISRVGGE…PPYEWMGYKL (191 aa)). Positions 728, 803, and 804 each coordinate Mg(2+). Positions 845 to 853 (YEWMGYKLW) are RT 'primer grip'. The Tryptophan repeat motif signature appears at 1015 to 1031 (WEQWWADYWQVSWIPEW). One can recognise an RNase H type-1 domain in the interval 1050-1173 (PIPKEDVYYV…IDKLVSKGIR (124 aa)). The Mg(2+) site is built by aspartate 1114 and aspartate 1165. The Integrase-type zinc-finger motif lies at 1179–1220 (EKIEEAQEKHERYHNNWKNLADTYGLPQIVAKEIVAMCPKCQ). Positions 1188, 1192, 1216, and 1219 each coordinate Zn(2+). Residues 1230–1380 (VDASPGTWQM…TSAERLINII (151 aa)) form the Integrase catalytic domain. Residues aspartate 1240 and aspartate 1292 each contribute to the Mg(2+) site. The integrase-type DNA-binding region spans 1399–1446 (FRVYYREGRDPVWKGPAQLIWKGEGAVVLKDGSDLKVVPRRKAKIIKD). Residues 1447–1467 (YEPKQRVGNEGDVEGTRGSDN) are disordered.

As to quaternary structure, homotrimer. Interacts with gp41 (via C-terminus). In terms of assembly, homodimer. The active site consists of two apposed aspartic acid residues. Heterodimer of p66 RT and p51 RT (RT p66/p51). Heterodimerization of RT is essential for DNA polymerase activity. Despite the sequence identities, p66 RT and p51 RT have distinct folding. As to quaternary structure, homotetramer; may further associate as a homohexadecamer. The cofactor is Mg(2+). Post-translationally, specific enzymatic cleavages by the viral protease yield mature proteins. The protease is released by autocatalytic cleavage. The polyprotein is cleaved during and after budding, this process is termed maturation. Proteolytic cleavage of p66 RT removes the RNase H domain to yield the p51 RT subunit. In terms of processing, capsid protein p24 is phosphorylated.

The protein localises to the virion. It is found in the host nucleus. It localises to the host cytoplasm. The protein resides in the host cell membrane. The catalysed reaction is Specific for a P1 residue that is hydrophobic, and P1' variable, but often Pro.. It catalyses the reaction Endohydrolysis of RNA in RNA/DNA hybrids. Three different cleavage modes: 1. sequence-specific internal cleavage of RNA. Human immunodeficiency virus type 1 and Moloney murine leukemia virus enzymes prefer to cleave the RNA strand one nucleotide away from the RNA-DNA junction. 2. RNA 5'-end directed cleavage 13-19 nucleotides from the RNA end. 3. DNA 3'-end directed cleavage 15-20 nucleotides away from the primer terminus.. It carries out the reaction 3'-end directed exonucleolytic cleavage of viral RNA-DNA hybrid.. The enzyme catalyses DNA(n) + a 2'-deoxyribonucleoside 5'-triphosphate = DNA(n+1) + diphosphate. Its activity is regulated as follows. The viral protease is inhibited by many synthetic protease inhibitors (PIs), such as amprenavir, atazanavir, indinavir, loprinavir, nelfinavir, ritonavir and saquinavir. RT can be inhibited either by nucleoside RT inhibitors (NRTIs) or by non nucleoside RT inhibitors (NNRTIs). NRTIs act as chain terminators, whereas NNRTIs inhibit DNA polymerization by binding a small hydrophobic pocket near the RT active site and inducing an allosteric change in this region. Classical NRTIs are abacavir, adefovir (PMEA), didanosine (ddI), lamivudine (3TC), stavudine (d4T), tenofovir (PMPA), zalcitabine (ddC), and zidovudine (AZT). Classical NNRTIs are atevirdine (BHAP U-87201E), delavirdine, efavirenz (DMP-266), emivirine (I-EBU), and nevirapine (BI-RG-587). The tritherapies used as a basic effective treatment of AIDS associate two NRTIs and one NNRTI. Use of protease inhibitors in tritherapy regimens permit more ambitious therapeutic strategies. Its function is as follows. Gag-Pol polyprotein and Gag polyprotein may regulate their own translation, by the binding genomic RNA in the 5'-UTR. At low concentration, Gag-Pol and Gag would promote translation, whereas at high concentration, the polyproteins encapsidate genomic RNA and then shut off translation. In terms of biological role, matrix protein p17 has two main functions: in infected cell, it targets Gag and Gag-pol polyproteins to the plasma membrane via a multipartite membrane-binding signal, that includes its myristointegration complex. The myristoylation signal and the NLS exert conflicting influences its subcellular localization. The key regulation of these motifs might be phosphorylation of a portion of MA molecules on the C-terminal tyrosine at the time of virus maturation, by virion-associated cellular tyrosine kinase. Implicated in the release from host cell mediated by Vpu. Capsid protein p24 forms the conical core that encapsulates the genomic RNA-nucleocapsid complex in the virion. The core is constituted by capsid protein hexamer subunits. The core is disassembled soon after virion entry. Interaction with host PPIA/CYPA protects the virus from restriction by host TRIM5-alpha and from an unknown antiviral activity in host cells. This capsid restriction by TRIM5 is one of the factors which restricts SIV to the simian species. Functionally, nucleocapsid protein p7 encapsulates and protects viral dimeric unspliced (genomic) RNA. Binds these RNAs through its zinc fingers. Facilitates rearangement of nucleic acid secondary structure during retrotranscription of genomic RNA. This capability is referred to as nucleic acid chaperone activity. Its function is as follows. The aspartyl protease mediates proteolytic cleavages of Gag and Gag-Pol polyproteins during or shortly after the release of the virion from the plasma membrane. Cleavages take place as an ordered, step-wise cascade to yield mature proteins. This process is called maturation. Displays maximal activity during the budding process just prior to particle release from the cell. Also cleaves Nef and Vif, probably concomitantly with viral structural proteins on maturation of virus particles. Hydrolyzes host EIF4GI and PABP1 in order to shut off the capped cellular mRNA translation. The resulting inhibition of cellular protein synthesis serves to ensure maximal viral gene expression and to evade host immune response. In terms of biological role, reverse transcriptase/ribonuclease H (RT) is a multifunctional enzyme that converts the viral dimeric RNA genome into dsDNA in the cytoplasm, shortly after virus entry into the cell. This enzyme displays a DNA polymerase activity that can copy either DNA or RNA templates, and a ribonuclease H (RNase H) activity that cleaves the RNA strand of RNA-DNA heteroduplexes in a partially processive 3' to 5' endonucleasic mode. Conversion of viral genomic RNA into dsDNA requires many steps. A tRNA binds to the primer-binding site (PBS) situated at the 5'-end of the viral RNA. RT uses the 3' end of the tRNA primer to perform a short round of RNA-dependent minus-strand DNA synthesis. The reading proceeds through the U5 region and ends after the repeated (R) region which is present at both ends of viral RNA. The portion of the RNA-DNA heteroduplex is digested by the RNase H, resulting in a ssDNA product attached to the tRNA primer. This ssDNA/tRNA hybridizes with the identical R region situated at the 3' end of viral RNA. This template exchange, known as minus-strand DNA strong stop transfer, can be either intra- or intermolecular. RT uses the 3' end of this newly synthesized short ssDNA to perform the RNA-dependent minus-strand DNA synthesis of the whole template. RNase H digests the RNA template except for two polypurine tracts (PPTs) situated at the 5'-end and near the center of the genome. It is not clear if both polymerase and RNase H activities are simultaneous. RNase H can probably proceed both in a polymerase-dependent (RNA cut into small fragments by the same RT performing DNA synthesis) and a polymerase-independent mode (cleavage of remaining RNA fragments by free RTs). Secondly, RT performs DNA-directed plus-strand DNA synthesis using the PPTs that have not been removed by RNase H as primers. PPTs and tRNA primers are then removed by RNase H. The 3' and 5' ssDNA PBS regions hybridize to form a circular dsDNA intermediate. Strand displacement synthesis by RT to the PBS and PPT ends produces a blunt ended, linear dsDNA copy of the viral genome that includes long terminal repeats (LTRs) at both ends. Integrase catalyzes viral DNA integration into the host chromosome, by performing a series of DNA cutting and joining reactions. This enzyme activity takes place after virion entry into a cell and reverse transcription of the RNA genome in dsDNA. The first step in the integration process is 3' processing. This step requires a complex comprising the viral genome, matrix protein, Vpr and integrase. This complex is called the pre-integration complex (PIC). The integrase protein removes 2 nucleotides from each 3' end of the viral DNA, leaving recessed CA OH's at the 3' ends. In the second step, the PIC enters cell nucleus. This process is mediated through integrase and Vpr proteins, and allows the virus to infect a non dividing cell. This ability to enter the nucleus is specific of lentiviruses, other retroviruses cannot and rely on cell division to access cell chromosomes. In the third step, termed strand transfer, the integrase protein joins the previously processed 3' ends to the 5' ends of strands of target cellular DNA at the site of integration. The 5'-ends are produced by integrase-catalyzed staggered cuts, 5 bp apart. A Y-shaped, gapped, recombination intermediate results, with the 5'-ends of the viral DNA strands and the 3' ends of target DNA strands remaining unjoined, flanking a gap of 5 bp. The last step is viral DNA integration into host chromosome. This involves host DNA repair synthesis in which the 5 bp gaps between the unjoined strands are filled in and then ligated. Since this process occurs at both cuts flanking the SIV genome, a 5 bp duplication of host DNA is produced at the ends of SIV integration. Alternatively, Integrase may catalyze the excision of viral DNA just after strand transfer, this is termed disintegration. The protein is Gag-Pol polyprotein (gag-pol) of Cercopithecidae (Old World monkeys).